The chain runs to 140 residues: Ribonucleases P/MRP protein subunit POP7 (140 aa).

A disordered region spans residues 1–21 (MALKKNTHNKSTKRVTKHPSL). Position 115 is a phosphoserine (S115).

This sequence belongs to the histone-like Alba family. Component of nuclear RNase P and RNase MRP complexes. RNase P consists of an RNA moiety and at least 9 protein subunits including POP1, POP3, POP4, POP5, POP6, POP7, POP8, RPP1 and RPR2. RNase MRP complex consists of an RNA moiety and at least 10 protein subunits including POP1, POP3, POP4, POP5, POP6, POP7, POP8, RMP1, RPP1 and SNM1, many of which are shared with the RNase P complex.

The protein resides in the nucleus. The catalysed reaction is Endonucleolytic cleavage of RNA, removing 5'-extranucleotides from tRNA precursor.. Functionally, component of ribonuclease P, a protein complex that generates mature tRNA molecules by cleaving their 5'-ends. Also a component of RNase MRP, which cleaves pre-rRNA sequences. The sequence is that of Ribonucleases P/MRP protein subunit POP7 (POP7) from Saccharomyces cerevisiae (strain ATCC 204508 / S288c) (Baker's yeast).